A 486-amino-acid chain; its full sequence is Catalase (486 aa).

The segment at 1–28 (MENKKLTAANGRPIADNQNSQTAGPRGP) is disordered. Active-site residues include histidine 54 and asparagine 127. Tyrosine 337 contacts heme.

The protein belongs to the catalase family. In terms of assembly, homodimer. Requires heme as cofactor.

It carries out the reaction 2 H2O2 = O2 + 2 H2O. Functionally, decomposes hydrogen peroxide into water and oxygen; serves to protect cells from the toxic effects of hydrogen peroxide. May be involved in aerotolerance of B.fragilis. This chain is Catalase (katA), found in Bacteroides fragilis (strain YCH46).